The primary structure comprises 161 residues: uncharacterized protein (161 aa).

2 disordered regions span residues 1 to 67 (MNSN…IQNF) and 80 to 147 (DSHQ…KKKQ). The segment covering 84 to 126 (NFNDNGFNNNNNNNNSNMNHNFSNQNNYNNNNNNNNNNNSNFN) has biased composition (low complexity). Residues 135–147 (GTSSQVGNNKKKQ) show a composition bias toward polar residues.

This is an uncharacterized protein from Dictyostelium discoideum (Social amoeba).